The chain runs to 103 residues: Large ribosomal subunit protein bL21 (103 aa).

Belongs to the bacterial ribosomal protein bL21 family. In terms of assembly, part of the 50S ribosomal subunit. Contacts protein L20.

Its function is as follows. This protein binds to 23S rRNA in the presence of protein L20. This chain is Large ribosomal subunit protein bL21, found in Heliobacterium modesticaldum (strain ATCC 51547 / Ice1).